Here is a 243-residue protein sequence, read N- to C-terminus: Small ribosomal subunit protein uS5 (243 aa).

Basic and acidic residues predominate over residues 1–10 (MSDNETKETQ). Positions 1–50 (MSDNETKETQVAEETQNTVATESNNEDRKGRRGQRGEGRRGERRNRREEN) are disordered. Polar residues predominate over residues 12–23 (AEETQNTVATES). Over residues 25-50 (NEDRKGRRGQRGEGRRGERRNRREEN) the composition is skewed to basic and acidic residues. In terms of domain architecture, S5 DRBM spans 55-118 (LLDRVVTINR…LDAKKHMFSV (64 aa)).

The protein belongs to the universal ribosomal protein uS5 family. Part of the 30S ribosomal subunit. Contacts proteins S4 and S8.

In terms of biological role, with S4 and S12 plays an important role in translational accuracy. Located at the back of the 30S subunit body where it stabilizes the conformation of the head with respect to the body. The chain is Small ribosomal subunit protein uS5 from Bifidobacterium longum (strain DJO10A).